The chain runs to 147 residues: MRVLLQRVSQASVSIDDTVHGQIGSGFLLLVGAQDQDTSEQIDYLVHKISHLRVFEDDAGKMNLSINDVGGQILSVSQFTLYANTKKGNRPSFVGAGDPQHASQIYDEFNQKLAATGLTVATGVFGADMQVALVNDGPVTIWFDTDA.

A Gly-cisPro motif, important for rejection of L-amino acids motif is present at residues 137–138 (GP).

This sequence belongs to the DTD family. Homodimer.

The protein resides in the cytoplasm. The catalysed reaction is glycyl-tRNA(Ala) + H2O = tRNA(Ala) + glycine + H(+). It carries out the reaction a D-aminoacyl-tRNA + H2O = a tRNA + a D-alpha-amino acid + H(+). Functionally, an aminoacyl-tRNA editing enzyme that deacylates mischarged D-aminoacyl-tRNAs. Also deacylates mischarged glycyl-tRNA(Ala), protecting cells against glycine mischarging by AlaRS. Acts via tRNA-based rather than protein-based catalysis; rejects L-amino acids rather than detecting D-amino acids in the active site. By recycling D-aminoacyl-tRNA to D-amino acids and free tRNA molecules, this enzyme counteracts the toxicity associated with the formation of D-aminoacyl-tRNA entities in vivo and helps enforce protein L-homochirality. The chain is D-aminoacyl-tRNA deacylase from Levilactobacillus brevis (strain ATCC 367 / BCRC 12310 / CIP 105137 / JCM 1170 / LMG 11437 / NCIMB 947 / NCTC 947) (Lactobacillus brevis).